The chain runs to 201 residues: PLASMODESMATA CALLOSE-BINDING PROTEIN 1 (201 aa).

A signal peptide spans 1–19 (MAALVLSLLLLSLAGHSSA). The cysteines at positions 22 and 84 are disulfide-linked. The span at 107–141 (SASGSSGSTTVTPGTTNPKGSPTTTTLPGSGTNSP) shows a compositional bias: low complexity. The tract at residues 107 to 164 (SASGSSGSTTVTPGTTNPKGSPTTTTLPGSGTNSPYSGNPTNGVFGGNSTGGTTGTGI) is disordered. Over residues 150-161 (VFGGNSTGGTTG) the composition is skewed to gly residues. N-linked (GlcNAc...) asparagine glycosylation occurs at asparagine 154. Serine 172 is lipidated: GPI-anchor amidated serine. Residues 173–201 (SAFALKNSSKLFICLLLIASSGFCSFLML) constitute a propeptide, removed in mature form. N-linked (GlcNAc...) asparagine glycosylation is present at asparagine 179.

Contains two additional disulfide bonds. Expressed in the shoot apical region and in young leaves but also detected in the laminar and vasculature of mature leaves.

The protein resides in the cell membrane. The protein localises to the cell junction. It localises to the plasmodesma. Its function is as follows. Able to bind (1-&gt;3)-beta-D-glucans (laminarin). Probably involved in cell-to-cell trafficking regulation. The protein is PLASMODESMATA CALLOSE-BINDING PROTEIN 1 (PDCB1) of Arabidopsis thaliana (Mouse-ear cress).